Reading from the N-terminus, the 294-residue chain is Glutamyl-Q tRNA(Asp) synthetase (294 aa).

L-glutamate is bound by residues 7-11 and Glu-43; that span reads RFAPS. The short motif at 10–20 is the 'HIGH' region element; the sequence is PSPSGPLHFGS. Zn(2+)-binding residues include Cys-99, Cys-101, Tyr-113, and Cys-117. Tyr-168 and Arg-186 together coordinate L-glutamate. Residues 224 to 228 carry the 'KMSKS' region motif; sequence KLSKQ. Residue Lys-227 participates in ATP binding.

It belongs to the class-I aminoacyl-tRNA synthetase family. GluQ subfamily. Requires Zn(2+) as cofactor.

Functionally, catalyzes the tRNA-independent activation of glutamate in presence of ATP and the subsequent transfer of glutamate onto a tRNA(Asp). Glutamate is transferred on the 2-amino-5-(4,5-dihydroxy-2-cyclopenten-1-yl) moiety of the queuosine in the wobble position of the QUC anticodon. The sequence is that of Glutamyl-Q tRNA(Asp) synthetase from Vibrio parahaemolyticus serotype O3:K6 (strain RIMD 2210633).